The sequence spans 284 residues: Interferon antagonist OPG040 (284 aa).

ANK repeat units follow at residues 29–58 (HGHS…LKNL), 60–89 (ENEF…DDSQ), 93–122 (KGNT…RLMF), 127–157 (GWKT…TFDL), 159–188 (ILLS…STNT), and 193–222 (LFIP…NIYS).

This sequence belongs to the orthopoxvirus OPG039 family.

The protein localises to the host cytoplasm. The protein resides in the host nucleus. In terms of biological role, inhibits antiviral activity induced by type I interferons. Does not block signal transduction of IFN, but is important to counter the host antiviral state induced by a pre-treatment with IFN. Plays a role in the inhibition of host NF-kappa-B activation by preventing the acetylation of the RELA/p65 subunit of NF-kappaB. The sequence is that of Interferon antagonist OPG040 (OPG039) from Bos taurus (Bovine).